Consider the following 151-residue polypeptide: Large ribosomal subunit protein bL9 (151 aa).

The protein belongs to the bacterial ribosomal protein bL9 family.

Binds to the 23S rRNA. The protein is Large ribosomal subunit protein bL9 of Bordetella petrii (strain ATCC BAA-461 / DSM 12804 / CCUG 43448).